The primary structure comprises 518 residues: Homoserine O-acetyltransferase (518 aa).

Positions 69–468 constitute an AB hydrolase-1 domain; that stretch reads NVMVICHALT…DSPEGHDAFL (400 aa). Serine 182 is a catalytic residue. Serine 182 serves as the catalytic Nucleophile. Residues 267–365 form a disordered region; it reads RFGRNIPDPS…PNSVSDPFRP (99 aa). Over residues 290–303 the composition is skewed to basic and acidic residues; it reads PAEEHYDIHNEGFR. The segment covering 310 to 341 has biased composition (low complexity); sequence RSSTTTSDAPPSPTRTSSTSSTDAITPASTTP. Active-site residues include aspartate 435 and histidine 464.

The protein belongs to the AB hydrolase superfamily. MetX family.

It catalyses the reaction L-homoserine + acetyl-CoA = O-acetyl-L-homoserine + CoA. It functions in the pathway amino-acid biosynthesis; L-methionine biosynthesis via de novo pathway; O-acetyl-L-homoserine from L-homoserine: step 1/1. Its function is as follows. Commits homoserine to the methionine biosynthesis pathway by catalyzing its O-acetylation. This is Homoserine O-acetyltransferase (MET2) from Ascobolus immersus.